The chain runs to 824 residues: MGFCMKDSKQYYKSSIGKSLKRSNGYLKLVLVLYLIMVSWSGYSKEVFNSRTKENINANWLYLEKNIKDINLALNDANWESINLPHTWNALDATDLNPGYRRSGSWYKKELAISNIENNKLYQLYFEGVNINSEVYVNGQKAGGHIGGYIGFTIDITEFIKSGKNDIVIRVDNSYDPEVIPSQKSDFFIFGGITRDVWLETIPKQHLSELKITTPKVSENEAELLATVAINNLNNSNLKVQANLLDAQGVTVVSSVFKIKNNTAKIHFRNIKNPKLWDTEHPNLYTLKVALLEKGDVIDSVQNRVGFRWFEFKDHGAFYLNGKRVLLRGTHRHEEHAGVGAAMSNMQHRKDMELIKDMGANFVRLAHYPQDPEVYKACDELGLLIWDELPWCRGGLGNETWKTNTKNMLTEIINQNYNHPSIIIWSLGNEMYWLPDFENGDDTDKMNSFLTELNDLAHQLDPSRKTAIRKYYEGSHIVDVFSPSIWSGWYSGSYKSYQKAIDTYKKEYPHFLHAEYGGSSHVGRHTENPVTGEGKIQSDGWEEEIVQTDVANIAQIGDWSENYIVDLFDWHLRISENDENFVGNVQWAFKDFGTPLRPENAIPYMNQKGLVDRAGNPKDAFYVFKSYWSKEPFTYIESHTWTERQGPKDLARDISVYSNCPEVELFLNGKSLGVKKRDLKVFPAAGLNWNLNFKEGKNTLVAVGKTKENKTVKDELAINYRFTKNGKAVGLKLESELLENGNYLVTAIAYDKNGLRCLDYEDQVYFQCLSGGETLKSQGTPTGSESIAMANGKAAIEVKRDGKNIPVVMMVLNQNFKGTYLTIE.

The helical transmembrane segment at 26–43 (YLKLVLVLYLIMVSWSGY) threads the bilayer. The Proton donor role is filled by glutamate 430.

It belongs to the glycosyl hydrolase 2 family.

Its subcellular location is the membrane. It catalyses the reaction a beta-D-glucuronoside + H2O = D-glucuronate + an alcohol. Glycoside hydrolase that may be involved in ulvan degradation. Ulvan is the main polysaccharide component of the Ulvales (green seaweed) cell wall. It is composed of disaccharide building blocks comprising 3-sulfated rhamnose (Rha3S) linked to D-glucuronic acid (GlcA), L-iduronic acid (IduA), or D-xylose (Xyl). This is Putative beta-glucuronidase from Formosa agariphila (strain DSM 15362 / KCTC 12365 / LMG 23005 / KMM 3901 / M-2Alg 35-1).